A 409-amino-acid polypeptide reads, in one-letter code: G2/mitotic-specific cyclin-B (409 aa).

It belongs to the cyclin family. Cyclin AB subfamily. In terms of assembly, interacts with the CDK1 protein kinase to form a serine/threonine kinase holoenzyme complex also known as maturation promoting factor (MPF). The cyclin subunit imparts substrate specificity to the complex.

Its function is as follows. Essential for the control of the cell cycle at the G2/M (mitosis) transition. This Arbacia punctulata (Punctuate sea urchin) protein is G2/mitotic-specific cyclin-B.